The chain runs to 299 residues: Probable alpha-L-glutamate ligase (299 aa).

The 183-residue stretch at 112–294 (LQLLTEQGIA…IALQMIVHIE (183 aa)) folds into the ATP-grasp domain. ATP is bound by residues Lys148, 185–186 (DF), Asp194, and 218–220 (RAN). 3 residues coordinate Mg(2+): Asp255, Glu267, and Asn269. Mn(2+) is bound by residues Asp255, Glu267, and Asn269.

This sequence belongs to the RimK family. It depends on Mg(2+) as a cofactor. The cofactor is Mn(2+).

This Histophilus somni (strain 129Pt) (Haemophilus somnus) protein is Probable alpha-L-glutamate ligase.